The chain runs to 167 residues: MPLNKESKQAVVAEVAAQVAKAQTVVLAEYRGIAVGDLTKLRAKAREQQVYLRVLKNTLARRAVEGTPFAPLAEQMTGPLIYGISEDAIAAAKVVNDFGKTNDKLIIKAGSYEGKVMDKAGVQALANIPSREELLSKLLYVMQAPVSGFARALAALAEKKQGEETAA.

It belongs to the universal ribosomal protein uL10 family. As to quaternary structure, part of the ribosomal stalk of the 50S ribosomal subunit. The N-terminus interacts with L11 and the large rRNA to form the base of the stalk. The C-terminus forms an elongated spine to which L12 dimers bind in a sequential fashion forming a multimeric L10(L12)X complex.

Forms part of the ribosomal stalk, playing a central role in the interaction of the ribosome with GTP-bound translation factors. This chain is Large ribosomal subunit protein uL10, found in Paraburkholderia phytofirmans (strain DSM 17436 / LMG 22146 / PsJN) (Burkholderia phytofirmans).